Reading from the N-terminus, the 253-residue chain is Major prion protein (253 aa).

Positions 1–22 (MANLGCWMLVLFVATWSDLGLC) are cleaved as a signal peptide. The tract at residues 23 to 230 (KKRPKPGGWN…ESQAYYQRGS (208 aa)) is interaction with GRB2, ERI3 and SYN1. Positions 26-108 (PKPGGWNTGG…WHKPSKPKTS (83 aa)) are disordered. 5 repeat units span residues 51 to 59 (PQGGGGWGQ), 60 to 67 (PHGGGWGQ), 68 to 75 (PHGGGWGQ), 76 to 83 (PHGGGWGQ), and 84 to 91 (PHGGGWGQ). Positions 51–91 (PQGGGGWGQPHGGGWGQPHGGGWGQPHGGGWGQPHGGGWGQ) are 5 X 8 AA tandem repeats of P-H-G-G-G-W-G-Q. The segment covering 52-95 (QGGGGWGQPHGGGWGQPHGGGWGQPHGGGWGQPHGGGWGQGGGT) has biased composition (gly residues). Residues H61, G62, G63, H69, G70, G71, H77, G78, G79, H85, G86, and G87 each contribute to the Cu(2+) site. Residues 98–108 (QWHKPSKPKTS) are compositionally biased toward basic residues. A disulfide bond links C179 and C214. N181 and N197 each carry an N-linked (GlcNAc...) asparagine glycan. The GPI-anchor amidated serine moiety is linked to residue S230. Positions 231–253 (SMVLFSSPPVILLISFLIFLIVG) are cleaved as a propeptide — removed in mature form.

Belongs to the prion family. In terms of assembly, monomer and homodimer. Has a tendency to aggregate into amyloid fibrils containing a cross-beta spine, formed by a steric zipper of superposed beta-strands. Soluble oligomers may represent an intermediate stage on the path to fibril formation. Copper binding may promote oligomerization. Interacts with GRB2, APP, ERI3/PRNPIP and SYN1. Mislocalized cytosolically exposed PrP interacts with MGRN1; this interaction alters MGRN1 subcellular location and causes lysosomal enlargement. Interacts with KIAA1191.

It localises to the cell membrane. It is found in the golgi apparatus. In terms of biological role, its primary physiological function is unclear. Has cytoprotective activity against internal or environmental stresses. May play a role in neuronal development and synaptic plasticity. May be required for neuronal myelin sheath maintenance. May play a role in iron uptake and iron homeostasis. Soluble oligomers are toxic to cultured neuroblastoma cells and induce apoptosis (in vitro). Association with GPC1 (via its heparan sulfate chains) targets PRNP to lipid rafts. Also provides Cu(2+) or Zn(2+) for the ascorbate-mediated GPC1 deaminase degradation of its heparan sulfate side chains. This chain is Major prion protein (PRNP), found in Macaca fascicularis (Crab-eating macaque).